A 148-amino-acid chain; its full sequence is Snaclec B9 (148 aa).

Residues 1 to 24 form the signal peptide; that stretch reads MGRFIFVSFGLLVVFLSLSGTGAA. Disulfide bonds link cysteine 27–cysteine 38, cysteine 55–cysteine 144, and cysteine 121–cysteine 136. The 112-residue stretch at 34–145 folds into the C-type lectin domain; sequence YDQHCYKVFD…CRLLGHFVCK (112 aa). Asparagine 57 and asparagine 60 each carry an N-linked (GlcNAc...) asparagine glycan.

Belongs to the snaclec family. In terms of assembly, heterodimer; disulfide-linked. In terms of tissue distribution, expressed by the venom gland.

The protein resides in the secreted. Interferes with one step of hemostasis (modulation of platelet aggregation, or coagulation cascade, for example). This chain is Snaclec B9, found in Macrovipera lebetinus (Levantine viper).